The primary structure comprises 2364 residues: Cytotoxin-L (2364 aa).

Residues 1–91 form a four-helical bundle region; the sequence is MNLVNKAQLQ…EVLELKNNSL (91 aa). Residues 96 to 468 enclose the GT44 domain; it reads KNLHFIWIGG…APDVRSTINL (373 aa). The tract at residues 96–468 is glucosyltransferase region; sequence KNLHFIWIGG…APDVRSTINL (373 aa). Residues 101–103, asparagine 139, 265–270, and 286–288 contribute to the UDP-alpha-D-glucose site; these read IWI, LAAASD, and DVD. The Mg(2+) site is built by aspartate 288, glutamate 515, and serine 518. Position 518–520 (518–520) interacts with UDP-alpha-D-glucose; sequence SLW. The segment at 544–799 is autoprocessing region; that stretch reads GEDDNLDFAQ…KSKYLHELST (256 aa). The Zn(2+) site is built by glutamate 545 and aspartate 546. Positions 567–774 constitute a Peptidase C80 domain; sequence LSSMKTRNKE…EESIIKDISS (208 aa). 3 residues coordinate 1D-myo-inositol hexakisphosphate: tyrosine 577, lysine 600, and lysine 647. Histidine 653 provides a ligand contact to Zn(2+). The active-site For protease activity is histidine 653. Cysteine 698 acts as the Nucleophile; for protease activity in catalysis. Histidine 757 provides a ligand contact to Zn(2+). 1D-myo-inositol hexakisphosphate contacts are provided by lysine 764, lysine 775, and lysine 792. The translocation region stretch occupies residues 800–1500; it reads LLQEIRNNAN…ESIIRNIYMP (701 aa). 5 interaction with host SEMA6A and SEMA6B regions span residues 1433-1438, 1466-1471, 1484-1495, 1504-1511, and 1596-1601; these read CMKLIE, DNETKY, FTAEFSNESIIR, NLFIYSSK, and YNNLDP. Cell wall-binding repeat units follow at residues 1813-1832, 1833-1852, 1854-1873, 1876-1895, 1926-1945, 1946-1965, 1967-1986, 1987-2006, 2007-2026, 2057-2076, 2077-2097, 2099-2118, 2119-2138, 2139-2158, 2209-2224, 2227-2249, 2250-2269, 2270-2289, 2320-2339, and 2340-2359; these read EFGLVSLDNDYFYINSFGNM, VSGLIYINDSLYYFKPPKNN, ITGFTTIDGNKYYFDPTKSG, SIGEITIDGKDYYFNKQGIL, FIGKLNIDGKIYYFEDNYRA, AVEWKLLDDETYYFNPKTGE, LKGLHQIGDNKYYFDDNGIM, QTGFITINDKVFYFNNDGVM, QVGYIEVNGKYFYFGKNGER, YNGILNFNGKIYFFDISNTA, VVGWGTLDDGSTYYFDDNRAE, CIGLTVINDCKYYFDDNGIR, QLGFITINDNIFYFSESGKI, ELGYQNINGNYFYIDESGLV, ETGWIENETDKYYFDP, KKAYKGINVVDDIKYYFDENGIM, RTGLISFENNNYYFNEDGKM, QFGYLNIKDKMFYFGKDGKM, YTGWLDLDGKRYYFTDEYIA, and ATGSLTIDGYNYYFDPDTAE. The tract at residues 1835–2364 is receptor-binding (CROPS) region; that stretch reads GLIYINDSLY…PDTAELVVSE (530 aa).

This sequence belongs to the clostridial glucosylating toxin (LCGT) family. Homomultimer; forms an inactive homomultimer at pH 8, which dissociates at pH 4, leading to cytotoxicity. Interacts with host SEMA6A; interaction promotes toxin entry into host cell. Interacts with host SEMA6B; interaction promotes toxin entry into host cell. Zn(2+) serves as cofactor. The cofactor is Mn(2+). Requires Mg(2+) as cofactor. Post-translationally, undergoes autocatalytic cleavage to release the N-terminal part (Glucosyltransferase TcsL), which constitutes the active part of the toxin, in the host cytosol. 1D-myo-inositol hexakisphosphate-binding (InsP6) activates the peptidase C80 domain and promotes autoprocessing.

The protein resides in the secreted. It is found in the host endosome membrane. Its subcellular location is the host cytoplasm. The protein localises to the host cytosol. It localises to the host cell membrane. The catalysed reaction is L-threonyl-[protein] + UDP-alpha-D-glucose = 3-O-(alpha-D-glucosyl)-L-threonyl-[protein] + UDP + H(+). Protease activity is activated upon binding to 1D-myo-inositol hexakisphosphate (InsP6), which induces conformational reorganization. In terms of biological role, precursor of a cytotoxin that targets the vascular endothelium, inducing an anti-inflammatory effect and resulting in lethal toxic shock syndrome. TcsL constitutes the main toxin that mediates the pathology of P.sordellii infection, an anaerobic Gram-positive bacterium found in soil and in the gastrointestinal and vaginal tracts of animals and humans; although the majority of carriers are asymptomatic, pathogenic P.sordellii infections arise rapidly and are highly lethal. This form constitutes the precursor of the toxin: it enters into host cells and mediates autoprocessing to release the active toxin (Glucosyltransferase TcsL) into the host cytosol. Targets vascular endothelium by binding to the semaphorin proteins SEMA6A and SEMA6B, and enters host cells via clathrin-mediated endocytosis. Once entered into host cells, acidification in the endosome promotes the membrane insertion of the translocation region and formation of a pore, leading to translocation of the GT44 and peptidase C80 domains across the endosomal membrane. This activates the peptidase C80 domain and autocatalytic processing, releasing the N-terminal part (Glucosyltransferase TcsL), which constitutes the active part of the toxin, in the cytosol. Functionally, active form of the toxin, which is released into the host cytosol following autoprocessing and inactivates small GTPases. Acts by mediating monoglucosylation of small GTPases of the Ras (H-Ras/HRAS, K-Ras/KRAS, N-Ras/NRAS and Ral/RALA) family in host cells at the conserved threonine residue located in the switch I region ('Thr-37/35'), using UDP-alpha-D-glucose as the sugar donor. Also able to catalyze monoglucosylation of some members of the Rho family (Rac1 and Rap2A), but with less efficiency than with Ras proteins. Monoglucosylation of host small GTPases completely prevents the recognition of the downstream effector, blocking the GTPases in their inactive form and leading to apoptosis. Induces an anti-inflammatory effect, mainly by inactivating Ras proteins which results in blockage of the cell cycle and killing of immune cells. The absence or moderate local inflammatory response allows C.sordellii spreading in deep tissues, production of toxin which is released in the general circulation and causes a toxic shock syndrome. In Paraclostridium sordellii (Clostridium sordellii), this protein is Cytotoxin-L.